Consider the following 572-residue polypeptide: Oxygen-dependent choline dehydrogenase (572 aa).

9-38 (DYVIIGGGSAGSVLGARLSEDKDKNVLVLE) lines the FAD pocket. The active-site Proton acceptor is the His477.

Belongs to the GMC oxidoreductase family. FAD serves as cofactor.

The enzyme catalyses choline + A = betaine aldehyde + AH2. It carries out the reaction betaine aldehyde + NAD(+) + H2O = glycine betaine + NADH + 2 H(+). It participates in amine and polyamine biosynthesis; betaine biosynthesis via choline pathway; betaine aldehyde from choline (cytochrome c reductase route): step 1/1. Its function is as follows. Involved in the biosynthesis of the osmoprotectant glycine betaine. Catalyzes the oxidation of choline to betaine aldehyde and betaine aldehyde to glycine betaine at the same rate. The protein is Oxygen-dependent choline dehydrogenase of Staphylococcus epidermidis (strain ATCC 12228 / FDA PCI 1200).